Consider the following 315-residue polypeptide: Ribose-phosphate pyrophosphokinase (315 aa).

Residues 37–39 (DGE) and 96–97 (RQ) contribute to the ATP site. H131 and D170 together coordinate Mg(2+). Residue K194 is part of the active site. D-ribose 5-phosphate-binding positions include R196, D220, and 224-228 (DTGGT).

Belongs to the ribose-phosphate pyrophosphokinase family. Class I subfamily. Homohexamer. Mg(2+) is required as a cofactor.

The protein localises to the cytoplasm. It catalyses the reaction D-ribose 5-phosphate + ATP = 5-phospho-alpha-D-ribose 1-diphosphate + AMP + H(+). The protein operates within metabolic intermediate biosynthesis; 5-phospho-alpha-D-ribose 1-diphosphate biosynthesis; 5-phospho-alpha-D-ribose 1-diphosphate from D-ribose 5-phosphate (route I): step 1/1. In terms of biological role, involved in the biosynthesis of the central metabolite phospho-alpha-D-ribosyl-1-pyrophosphate (PRPP) via the transfer of pyrophosphoryl group from ATP to 1-hydroxyl of ribose-5-phosphate (Rib-5-P). The chain is Ribose-phosphate pyrophosphokinase from Salmonella typhi.